A 267-amino-acid chain; its full sequence is Ubiquinone biosynthesis protein COQ4, mitochondrial (267 aa).

The N-terminal 17 residues, 1–17, are a transit peptide targeting the mitochondrion; the sequence is MSRLKIPSQLLRGGRGF. Zn(2+) contacts are provided by His-153, Asp-154, His-157, and Glu-169.

The protein belongs to the COQ4 family. Component of a multi-subunit COQ enzyme complex, composed of at least COQ3, COQ4, COQ5, COQ6, COQ7 and COQ9. It depends on Zn(2+) as a cofactor.

The protein resides in the mitochondrion inner membrane. The enzyme catalyses a 4-hydroxy-3-methoxy-5-(all-trans-polyprenyl)benzoate + H(+) = a 2-methoxy-6-(all-trans-polyprenyl)phenol + CO2. The protein operates within cofactor biosynthesis; ubiquinone biosynthesis. Functionally, lyase that catalyzes the C1-decarboxylation of 4-hydroxy-3-methoxy-5-(all-trans-polyprenyl)benzoic acid into 2-methoxy-6-(all-trans-polyprenyl)phenol during ubiquinone biosynthesis. The chain is Ubiquinone biosynthesis protein COQ4, mitochondrial from Arthroderma otae (strain ATCC MYA-4605 / CBS 113480) (Microsporum canis).